Here is a 506-residue protein sequence, read N- to C-terminus: Maturase K (506 aa).

It belongs to the intron maturase 2 family. MatK subfamily.

The protein localises to the plastid. The protein resides in the chloroplast. Its function is as follows. Usually encoded in the trnK tRNA gene intron. Probably assists in splicing its own and other chloroplast group II introns. This Trifolium fragiferum (Strawberry clover) protein is Maturase K.